Consider the following 187-residue polypeptide: Sodium/potassium ATPase inhibitor SPAI-2 (187 aa).

The N-terminal stretch at methionine 1–alanine 21 is a signal peptide. A Pyrrolidone carboxylic acid modification is found at glutamine 22. The propeptide occupies glutamine 22 to aspartate 126. Residues arginine 28–aspartate 98 form a disordered region. 14 consecutive repeat copies span residues glycine 34 to glutamate 39, glycine 40 to glutamate 45, glycine 46 to lysine 51, glycine 58 to lysine 63, glycine 64 to lysine 69, glycine 70 to lysine 75, glycine 76 to lysine 81, glycine 82 to lysine 87, serine 88 to lysine 93, glycine 100 to lysine 105, glycine 106 to glutamate 111, glycine 112 to asparagine 117, alanine 118 to lysine 123, and valine 124 to lysine 129. The interval glycine 34–lysine 129 is 14 X 6 AA approximate tandem repeats. Residues glycine 64–leucine 85 form an SVP-1 clotting 1 repeat. Residues leucine 139–lysine 187 form the WAP domain. Disulfide bonds link cysteine 146–cysteine 175, cysteine 153–cysteine 179, cysteine 162–cysteine 174, and cysteine 168–cysteine 183.

In terms of processing, the short form (AA 127-187) may be an artifact due to the strongly acidic conditions of the duodenum. The pro-SPAI form may be the native form. Small intestine &gt; large intestine. The plasma contains the pro-SPAI form circulating.

Functionally, inhibits Na(+),K(+) ATPase by the competitive mode against Na(+). This is Sodium/potassium ATPase inhibitor SPAI-2 from Sus scrofa (Pig).